Consider the following 419-residue polypeptide: UDP-N-acetylglucosamine 1-carboxyvinyltransferase (419 aa).

22–23 (KN) contacts phosphoenolpyruvate. UDP-N-acetyl-alpha-D-glucosamine is bound at residue R91. Catalysis depends on C115, which acts as the Proton donor. A 2-(S-cysteinyl)pyruvic acid O-phosphothioketal modification is found at C115. Residues 120 to 124 (RPVDL), 160 to 163 (KVSV), D305, and V327 each bind UDP-N-acetyl-alpha-D-glucosamine.

Belongs to the EPSP synthase family. MurA subfamily.

It localises to the cytoplasm. The enzyme catalyses phosphoenolpyruvate + UDP-N-acetyl-alpha-D-glucosamine = UDP-N-acetyl-3-O-(1-carboxyvinyl)-alpha-D-glucosamine + phosphate. It participates in cell wall biogenesis; peptidoglycan biosynthesis. In terms of biological role, cell wall formation. Adds enolpyruvyl to UDP-N-acetylglucosamine. This Shigella boydii serotype 18 (strain CDC 3083-94 / BS512) protein is UDP-N-acetylglucosamine 1-carboxyvinyltransferase.